A 484-amino-acid polypeptide reads, in one-letter code: Cysteine--tRNA ligase (484 aa).

Cys29 contributes to the Zn(2+) binding site. A 'HIGH' region motif is present at residues 31–41 (ITVYDYCHLGH). Zn(2+) contacts are provided by Cys215, His240, and Glu244. Residues 272 to 276 (KMSKS) carry the 'KMSKS' region motif. Residue Lys275 coordinates ATP.

The protein belongs to the class-I aminoacyl-tRNA synthetase family. As to quaternary structure, monomer. Requires Zn(2+) as cofactor.

It localises to the cytoplasm. It carries out the reaction tRNA(Cys) + L-cysteine + ATP = L-cysteinyl-tRNA(Cys) + AMP + diphosphate. In Rippkaea orientalis (strain PCC 8801 / RF-1) (Cyanothece sp. (strain PCC 8801)), this protein is Cysteine--tRNA ligase.